A 100-amino-acid chain; its full sequence is Large ribosomal subunit protein uL23 (100 aa).

Belongs to the universal ribosomal protein uL23 family. In terms of assembly, part of the 50S ribosomal subunit. Contacts protein L29, and trigger factor when it is bound to the ribosome.

In terms of biological role, one of the early assembly proteins it binds 23S rRNA. One of the proteins that surrounds the polypeptide exit tunnel on the outside of the ribosome. Forms the main docking site for trigger factor binding to the ribosome. In Mycolicibacterium paratuberculosis (strain ATCC BAA-968 / K-10) (Mycobacterium paratuberculosis), this protein is Large ribosomal subunit protein uL23.